Consider the following 515-residue polypeptide: Bifunctional purine biosynthesis protein PurH (515 aa).

An MGS-like domain is found at Met-1–Val-145.

The protein belongs to the PurH family.

The catalysed reaction is (6R)-10-formyltetrahydrofolate + 5-amino-1-(5-phospho-beta-D-ribosyl)imidazole-4-carboxamide = 5-formamido-1-(5-phospho-D-ribosyl)imidazole-4-carboxamide + (6S)-5,6,7,8-tetrahydrofolate. It catalyses the reaction IMP + H2O = 5-formamido-1-(5-phospho-D-ribosyl)imidazole-4-carboxamide. It participates in purine metabolism; IMP biosynthesis via de novo pathway; 5-formamido-1-(5-phospho-D-ribosyl)imidazole-4-carboxamide from 5-amino-1-(5-phospho-D-ribosyl)imidazole-4-carboxamide (10-formyl THF route): step 1/1. Its pathway is purine metabolism; IMP biosynthesis via de novo pathway; IMP from 5-formamido-1-(5-phospho-D-ribosyl)imidazole-4-carboxamide: step 1/1. The chain is Bifunctional purine biosynthesis protein PurH from Streptococcus pneumoniae (strain P1031).